A 325-amino-acid chain; its full sequence is Putative HTH-type transcriptional regulatory protein MK1005 (325 aa).

In terms of domain architecture, HTH cro/C1-type spans valine 128–glutamate 190. Residues arginine 139 to valine 158 constitute a DNA-binding region (H-T-H motif).

In Methanopyrus kandleri (strain AV19 / DSM 6324 / JCM 9639 / NBRC 100938), this protein is Putative HTH-type transcriptional regulatory protein MK1005.